We begin with the raw amino-acid sequence, 971 residues long: U2 snRNP component HSH155 (971 aa).

Disordered regions lie at residues 1-22 (MSHP…LGGQ) and 54-118 (TRTV…AVKE). A compositionally biased stretch (polar residues) spans 8–22 (VNANNSDKSHQLGGQ). Residues 54-75 (TRTVQNREDSYHKRRFDMKFEP) are compositionally biased toward basic and acidic residues. A compositionally biased stretch (polar residues) spans 78-90 (DTQTVTSSENTQD). 9 HEAT repeats span residues 199 to 237 (MIFN…DLTK), 273 to 310 (AGLK…ALGV), 350 to 387 (NHLT…NSYP), 513 to 550 (LGCS…LLGT), 596 to 633 (PFLA…VIKN), 680 to 717 (PPIN…LAPT), 722 to 759 (KEWM…AIGP), 792 to 829 (CGPY…YIGN), and 832 to 870 (KDYI…NCSG).

It belongs to the SF3B1 family. As to quaternary structure, belongs to the CWC complex (or CEF1-associated complex), a spliceosome sub-complex reminiscent of a late-stage spliceosome composed of the U2, U5 and U6 snRNAs and at least BUD13, BUD31, BRR2, CDC40, CEF1, CLF1, CUS1, CWC2, CWC15, CWC21, CWC22, CWC23, CWC24, CWC25, CWC27, ECM2, HSH155, IST3, ISY1, LEA1, MSL1, NTC20, PRP8, PRP9, PRP11, PRP19, PRP21, PRP22, PRP45, PRP46, SLU7, SMB1, SMD1, SMD2, SMD3, SMX2, SMX3, SNT309, SNU114, SPP2, SYF1, SYF2, RSE1 and YJU2. Interacts with RDS3.

The protein localises to the nucleus. Contacts pre-mRNA on both sides of the branch site early in spliceosome assembly. The chain is U2 snRNP component HSH155 (HSH155) from Saccharomyces cerevisiae (strain ATCC 204508 / S288c) (Baker's yeast).